Reading from the N-terminus, the 245-residue chain is 3-deoxy-manno-octulosonate cytidylyltransferase (245 aa).

Belongs to the KdsB family.

Its subcellular location is the cytoplasm. It catalyses the reaction 3-deoxy-alpha-D-manno-oct-2-ulosonate + CTP = CMP-3-deoxy-beta-D-manno-octulosonate + diphosphate. It functions in the pathway nucleotide-sugar biosynthesis; CMP-3-deoxy-D-manno-octulosonate biosynthesis; CMP-3-deoxy-D-manno-octulosonate from 3-deoxy-D-manno-octulosonate and CTP: step 1/1. It participates in bacterial outer membrane biogenesis; lipopolysaccharide biosynthesis. Functionally, activates KDO (a required 8-carbon sugar) for incorporation into bacterial lipopolysaccharide in Gram-negative bacteria. The polypeptide is 3-deoxy-manno-octulosonate cytidylyltransferase (Rhodopseudomonas palustris (strain BisB5)).